A 577-amino-acid polypeptide reads, in one-letter code: Proline--tRNA ligase (577 aa).

Belongs to the class-II aminoacyl-tRNA synthetase family. ProS type 1 subfamily. In terms of assembly, homodimer.

The protein resides in the cytoplasm. The catalysed reaction is tRNA(Pro) + L-proline + ATP = L-prolyl-tRNA(Pro) + AMP + diphosphate. Catalyzes the attachment of proline to tRNA(Pro) in a two-step reaction: proline is first activated by ATP to form Pro-AMP and then transferred to the acceptor end of tRNA(Pro). As ProRS can inadvertently accommodate and process non-cognate amino acids such as alanine and cysteine, to avoid such errors it has two additional distinct editing activities against alanine. One activity is designated as 'pretransfer' editing and involves the tRNA(Pro)-independent hydrolysis of activated Ala-AMP. The other activity is designated 'posttransfer' editing and involves deacylation of mischarged Ala-tRNA(Pro). The misacylated Cys-tRNA(Pro) is not edited by ProRS. The protein is Proline--tRNA ligase of Helicobacter pylori (strain ATCC 700392 / 26695) (Campylobacter pylori).